A 418-amino-acid polypeptide reads, in one-letter code: Enolase (418 aa).

Gln162 is a binding site for (2R)-2-phosphoglycerate. Glu204 (proton donor) is an active-site residue. 3 residues coordinate Mg(2+): Asp241, Glu283, and Asp309. Lys334, Arg363, Ser364, and Lys385 together coordinate (2R)-2-phosphoglycerate. Lys334 acts as the Proton acceptor in catalysis.

This sequence belongs to the enolase family. The cofactor is Mg(2+).

It localises to the cytoplasm. The protein localises to the secreted. The protein resides in the cell surface. It carries out the reaction (2R)-2-phosphoglycerate = phosphoenolpyruvate + H2O. The protein operates within carbohydrate degradation; glycolysis; pyruvate from D-glyceraldehyde 3-phosphate: step 4/5. In terms of biological role, catalyzes the reversible conversion of 2-phosphoglycerate (2-PG) into phosphoenolpyruvate (PEP). It is essential for the degradation of carbohydrates via glycolysis. The sequence is that of Enolase from Pelagibacter ubique (strain HTCC1062).